Consider the following 750-residue polypeptide: Photosystem I P700 chlorophyll a apoprotein A1 (750 aa).

Transmembrane regions (helical) follow at residues 70–93, 156–179, 195–219, 291–309, 346–369, 385–411, 433–455, and 531–549; these read IFSAHFGQLSIIFLWLSGMYFHGA, LYCTAIGALVFAALMLFAGWFHYH, LNHHLAGLLGLGSLSWAGHQIHVSL, TAHHHLAIAILFLIAGHMY, WHAQLALNLAMLGSLTIVVAHHMY, LSLFTHHMWIGGFLIVGAAAHAAIFMV, AIISHLNWACIFLGFHSFGLYIH, and FLVHHIHAFTIHVTVLILL. C573 and C582 together coordinate [4Fe-4S] cluster. 2 helical membrane passes run 589–610 and 664–686; these read HVFLGLFWMYNSISVVIFHFSW and LSAYGLFFLGAHFVWAFSLMFLF. H675 serves as a coordination point for chlorophyll a'. M683 and Y691 together coordinate chlorophyll a. Phylloquinone is bound at residue W692. A helical transmembrane segment spans residues 724-744; that stretch reads AVGVTHYLLGGIATTWAFFLA.

It belongs to the PsaA/PsaB family. In terms of assembly, the PsaA/B heterodimer binds the P700 chlorophyll special pair and subsequent electron acceptors. PSI consists of a core antenna complex that captures photons, and an electron transfer chain that converts photonic excitation into a charge separation. The eukaryotic PSI reaction center is composed of at least 11 subunits. P700 is a chlorophyll a/chlorophyll a' dimer, A0 is one or more chlorophyll a, A1 is one or both phylloquinones and FX is a shared 4Fe-4S iron-sulfur center. is required as a cofactor.

It localises to the plastid. The protein resides in the chloroplast thylakoid membrane. It catalyses the reaction reduced [plastocyanin] + hnu + oxidized [2Fe-2S]-[ferredoxin] = oxidized [plastocyanin] + reduced [2Fe-2S]-[ferredoxin]. PsaA and PsaB bind P700, the primary electron donor of photosystem I (PSI), as well as the electron acceptors A0, A1 and FX. PSI is a plastocyanin-ferredoxin oxidoreductase, converting photonic excitation into a charge separation, which transfers an electron from the donor P700 chlorophyll pair to the spectroscopically characterized acceptors A0, A1, FX, FA and FB in turn. Oxidized P700 is reduced on the lumenal side of the thylakoid membrane by plastocyanin. This chain is Photosystem I P700 chlorophyll a apoprotein A1, found in Spinacia oleracea (Spinach).